Consider the following 484-residue polypeptide: Cobyric acid synthase (484 aa).

Residues 251-438 enclose the GATase cobBQ-type domain; sequence ALKIAVPVLS…LHGLFGNDEY (188 aa). Cys-333 acts as the Nucleophile in catalysis. His-430 is an active-site residue.

The protein belongs to the CobB/CobQ family. CobQ subfamily.

It participates in cofactor biosynthesis; adenosylcobalamin biosynthesis. In terms of biological role, catalyzes amidations at positions B, D, E, and G on adenosylcobyrinic A,C-diamide. NH(2) groups are provided by glutamine, and one molecule of ATP is hydrogenolyzed for each amidation. This Allorhizobium ampelinum (strain ATCC BAA-846 / DSM 112012 / S4) (Agrobacterium vitis (strain S4)) protein is Cobyric acid synthase.